The following is a 69-amino-acid chain: Sperm protamine P1 (69 aa).

2 stretches are compositionally biased toward basic residues: residues methionine 1–glycine 30 and lysine 37–asparagine 69. The tract at residues methionine 1–asparagine 69 is disordered.

The protein belongs to the protamine P1 family. Testis.

The protein localises to the nucleus. It is found in the chromosome. In terms of biological role, protamines substitute for histones in the chromatin of sperm during the haploid phase of spermatogenesis. They compact sperm DNA into a highly condensed, stable and inactive complex. The chain is Sperm protamine P1 (PRM1) from Tachyglossus aculeatus aculeatus (Southeast Australian short-beaked echidna).